Reading from the N-terminus, the 51-residue chain is Large ribosomal subunit protein eL39 (51 aa).

The interval 1 to 22 (MAAQKSFRIKQKMAKAKKQNRP) is disordered. Basic residues predominate over residues 7-20 (FRIKQKMAKAKKQN).

This sequence belongs to the eukaryotic ribosomal protein eL39 family. Component of the large ribosomal subunit (LSU). Mature yeast ribosomes consist of a small (40S) and a large (60S) subunit. The 40S small subunit contains 1 molecule of ribosomal RNA (18S rRNA) and 33 different proteins (encoded by 57 genes). The large 60S subunit contains 3 rRNA molecules (25S, 5.8S and 5S rRNA) and 46 different proteins (encoded by 81 genes). eL39 interacts with YIH1.

The protein resides in the cytoplasm. Component of the ribosome, a large ribonucleoprotein complex responsible for the synthesis of proteins in the cell. The small ribosomal subunit (SSU) binds messenger RNAs (mRNAs) and translates the encoded message by selecting cognate aminoacyl-transfer RNA (tRNA) molecules. The large subunit (LSU) contains the ribosomal catalytic site termed the peptidyl transferase center (PTC), which catalyzes the formation of peptide bonds, thereby polymerizing the amino acids delivered by tRNAs into a polypeptide chain. The nascent polypeptides leave the ribosome through a tunnel in the LSU and interact with protein factors that function in enzymatic processing, targeting, and the membrane insertion of nascent chains at the exit of the ribosomal tunnel. The sequence is that of Large ribosomal subunit protein eL39 from Saccharomyces cerevisiae (strain ATCC 204508 / S288c) (Baker's yeast).